The sequence spans 320 residues: ATP-dependent 6-phosphofructokinase isozyme 1 (320 aa).

ATP is bound at residue Gly12. ADP contacts are provided by residues 22 to 26 (RGVVR) and 55 to 60 (RYSVSD). ATP-binding positions include 73-74 (RF) and 103-106 (GDGS). Asp104 provides a ligand contact to Mg(2+). Position 126 to 128 (126 to 128 (TID)) interacts with substrate. Asp128 functions as the Proton acceptor in the catalytic mechanism. Arg155 provides a ligand contact to ADP. Substrate is bound by residues Arg163 and 170 to 172 (MGR). ADP-binding positions include 186-188 (GCE), Lys212, and 214-216 (KKH). Substrate-binding positions include Glu223, Arg244, and 250 to 253 (HIQR).

It belongs to the phosphofructokinase type A (PFKA) family. ATP-dependent PFK group I subfamily. Prokaryotic clade 'B1' sub-subfamily. Homotetramer. Mg(2+) is required as a cofactor.

It is found in the cytoplasm. It catalyses the reaction beta-D-fructose 6-phosphate + ATP = beta-D-fructose 1,6-bisphosphate + ADP + H(+). It functions in the pathway carbohydrate degradation; glycolysis; D-glyceraldehyde 3-phosphate and glycerone phosphate from D-glucose: step 3/4. Allosterically activated by ADP and other diphosphonucleosides, and allosterically inhibited by phosphoenolpyruvate. In terms of biological role, catalyzes the phosphorylation of D-fructose 6-phosphate to fructose 1,6-bisphosphate by ATP, the first committing step of glycolysis. This is ATP-dependent 6-phosphofructokinase isozyme 1 from Shigella boydii serotype 18 (strain CDC 3083-94 / BS512).